We begin with the raw amino-acid sequence, 150 residues long: UPF0756 membrane protein ABAYE1440 (150 aa).

Transmembrane regions (helical) follow at residues 1-21 (MLAQ…CGLL), 45-65 (FFPY…TIGV), 83-103 (FISF…WLGG), and 115-135 (VVAG…GVPV).

This sequence belongs to the UPF0756 family.

The protein localises to the cell membrane. The sequence is that of UPF0756 membrane protein ABAYE1440 from Acinetobacter baumannii (strain AYE).